A 292-amino-acid chain; its full sequence is Acetylglutamate kinase (292 aa).

Substrate is bound by residues 60-61, Arg82, and Asn187; that span reads GG.

It belongs to the acetylglutamate kinase family. ArgB subfamily.

It is found in the cytoplasm. It carries out the reaction N-acetyl-L-glutamate + ATP = N-acetyl-L-glutamyl 5-phosphate + ADP. The protein operates within amino-acid biosynthesis; L-arginine biosynthesis; N(2)-acetyl-L-ornithine from L-glutamate: step 2/4. Functionally, catalyzes the ATP-dependent phosphorylation of N-acetyl-L-glutamate. The sequence is that of Acetylglutamate kinase from Methanobrevibacter smithii (strain ATCC 35061 / DSM 861 / OCM 144 / PS).